The primary structure comprises 69 residues: UPF0150 protein Ta0767 (69 aa).

Belongs to the UPF0150 family.

This is UPF0150 protein Ta0767 from Thermoplasma acidophilum (strain ATCC 25905 / DSM 1728 / JCM 9062 / NBRC 15155 / AMRC-C165).